The sequence spans 131 residues: Small ribosomal subunit protein uS8 (131 aa).

The protein belongs to the universal ribosomal protein uS8 family. As to quaternary structure, part of the 30S ribosomal subunit. Contacts proteins S5 and S12.

One of the primary rRNA binding proteins, it binds directly to 16S rRNA central domain where it helps coordinate assembly of the platform of the 30S subunit. The protein is Small ribosomal subunit protein uS8 of Thermodesulfovibrio yellowstonii (strain ATCC 51303 / DSM 11347 / YP87).